The sequence spans 266 residues: Arcelin-4 (266 aa).

An N-terminal signal peptide occupies residues 1–21 (MGSSKLLSLALLLVLLTHANS). Residues Asn28 and Asn92 are each glycosylated (N-linked (GlcNAc...) asparagine).

This sequence belongs to the leguminous lectin family.

Functionally, seed storage. This carbohydrate-binding lectin has toxic effects on the important bean bruchid pests, Z.subfasciatus and A.obtectus. This chain is Arcelin-4 (ARC4), found in Phaseolus vulgaris (Kidney bean).